Reading from the N-terminus, the 347-residue chain is uncharacterized protein (347 aa).

Residues Asp207, Asp218, His279, Glu312, and Glu326 each contribute to the Mn(2+) site.

Belongs to the peptidase M24B family. The cofactor is Mn(2+).

This is an uncharacterized protein from Methanocaldococcus jannaschii (strain ATCC 43067 / DSM 2661 / JAL-1 / JCM 10045 / NBRC 100440) (Methanococcus jannaschii).